A 1035-amino-acid chain; its full sequence is Ephrin type-A receptor 6 (1035 aa).

An N-terminal signal peptide occupies residues 1-22 (MGGCEVREFLLQFGFFLPLLTA). The Extracellular segment spans residues 23–549 (WTGDCSHVSN…MAAEQGQILV (527 aa)). The Eph LBD domain occupies 33 to 211 (QVVLLDTSTV…FYKKCPFTVR (179 aa)). Fibronectin type-III domains lie at 330-440 (PPSA…TDQD) and 441-536 (APSL…TGDE). 3 N-linked (GlcNAc...) asparagine glycosylation sites follow: Asn342, Asn396, and Asn409. A helical transmembrane segment spans residues 550-570 (IATAAVGGFTLLVILTLFFLI). The Cytoplasmic segment spans residues 571–1035 (TGRCQWYIKA…MHIQEKGFHV (465 aa)). Phosphotyrosine; by autocatalysis occurs at positions 605 and 611. In terms of domain architecture, Protein kinase spans 630 to 943 (IRIERVIGAG…RNPSALHTLV (314 aa)). ATP-binding positions include 636-644 (IGAGEFGEV) and Lys662. Asp797 acts as the Proton acceptor in catalysis. Residues Tyr830 and Tyr977 each carry the phosphotyrosine; by autocatalysis modification. The 65-residue stretch at 960–1024 (PLFVTVGDWL…VSSIQTLRLH (65 aa)) folds into the SAM domain. The PDZ-binding signature appears at 1033–1035 (FHV).

It belongs to the protein kinase superfamily. Tyr protein kinase family. Ephrin receptor subfamily. Heterotetramer upon binding of the ligand. The heterotetramer is composed of an ephrin dimer and a receptor dimer. Oligomerization is probably required to induce biological responses. Interacts (via SAM domain) with ANKS1A (via SAM domain). In terms of tissue distribution, brain.

It is found in the membrane. It catalyses the reaction L-tyrosyl-[protein] + ATP = O-phospho-L-tyrosyl-[protein] + ADP + H(+). Receptor tyrosine kinase which binds promiscuously GPI-anchored ephrin-A family ligands residing on adjacent cells, leading to contact-dependent bidirectional signaling into neighboring cells. The signaling pathway downstream of the receptor is referred to as forward signaling while the signaling pathway downstream of the ephrin ligand is referred to as reverse signaling. The sequence is that of Ephrin type-A receptor 6 (Epha6) from Rattus norvegicus (Rat).